The sequence spans 753 residues: 5-methyltetrahydropteroyltriglutamate--homocysteine methyltransferase (753 aa).

Residues 17 to 20 (RELK) and Lys-117 contribute to the 5-methyltetrahydropteroyltri-L-glutamate site. L-homocysteine-binding positions include 431-433 (IGS) and Glu-484. L-methionine-binding positions include 431-433 (IGS) and Glu-484. 5-methyltetrahydropteroyltri-L-glutamate is bound by residues 515-516 (RC) and Trp-561. Asp-599 is an L-homocysteine binding site. Asp-599 is a binding site for L-methionine. Glu-605 provides a ligand contact to 5-methyltetrahydropteroyltri-L-glutamate. Zn(2+) is bound by residues His-641, Cys-643, and Glu-665. His-694 functions as the Proton donor in the catalytic mechanism. Residue Cys-726 participates in Zn(2+) binding.

It belongs to the vitamin-B12 independent methionine synthase family. It depends on Zn(2+) as a cofactor.

It carries out the reaction 5-methyltetrahydropteroyltri-L-glutamate + L-homocysteine = tetrahydropteroyltri-L-glutamate + L-methionine. The protein operates within amino-acid biosynthesis; L-methionine biosynthesis via de novo pathway; L-methionine from L-homocysteine (MetE route): step 1/1. In terms of biological role, catalyzes the transfer of a methyl group from 5-methyltetrahydrofolate to homocysteine resulting in methionine formation. The sequence is that of 5-methyltetrahydropteroyltriglutamate--homocysteine methyltransferase from Escherichia coli (strain SMS-3-5 / SECEC).